A 118-amino-acid polypeptide reads, in one-letter code: Large ribosomal subunit protein bL17 (118 aa).

This sequence belongs to the bacterial ribosomal protein bL17 family. As to quaternary structure, part of the 50S ribosomal subunit. Contacts protein L32.

This Thermus thermophilus (strain ATCC BAA-163 / DSM 7039 / HB27) protein is Large ribosomal subunit protein bL17.